The chain runs to 423 residues: Deferrochelatase (423 aa).

A signal peptide (tat-type signal) is located at residues 1 to 35 (MQYEDENGVNEPSRRRLLKGIGALALAGSCPVAHA). Residues 236-238 (GTA), His-329, 334-336 (NPR), and Arg-347 each bind heme b.

The protein belongs to the DyP-type peroxidase family. EfeB subfamily. In terms of assembly, homodimer. Part of a ferrous iron transporter composed of EfeU, EfeO and EfeB. Heme b serves as cofactor. Post-translationally, predicted to be exported by the Tat system. The position of the signal peptide cleavage has not been experimentally proven.

Its subcellular location is the periplasm. The catalysed reaction is heme b + 2 H(+) = protoporphyrin IX + Fe(2+). Functionally, involved in the recovery of exogenous heme iron. Extracts iron from heme while preserving the protoporphyrin ring intact. This Escherichia coli O6:H1 (strain CFT073 / ATCC 700928 / UPEC) protein is Deferrochelatase (efeB).